Reading from the N-terminus, the 721-residue chain is Polyribonucleotide nucleotidyltransferase (721 aa).

Asp-495 and Asp-501 together coordinate Mg(2+). The region spanning Pro-562–Ile-621 is the KH domain. The S1 motif domain maps to Gly-631–Arg-699.

It belongs to the polyribonucleotide nucleotidyltransferase family. Requires Mg(2+) as cofactor.

It localises to the cytoplasm. The catalysed reaction is RNA(n+1) + phosphate = RNA(n) + a ribonucleoside 5'-diphosphate. In terms of biological role, involved in mRNA degradation. Catalyzes the phosphorolysis of single-stranded polyribonucleotides processively in the 3'- to 5'-direction. The chain is Polyribonucleotide nucleotidyltransferase from Synechococcus sp. (strain CC9605).